A 524-amino-acid chain; its full sequence is MSQLSMSWMGLGHTAASPWLLLLLAGASCLLAYILTPIYGVFENSLRLRCFPQPPKRNWILGHLGLIQSSEEGLLYIQSLVRTFRDACCWWVGPLHPVIRIFHPAFIKPVVLAPALVAPKDTVFYRFLKPWLGDGLLMSTGDKWSRHRRMLTPAFHFNILKPYVKVFNDSTNIMHAKWQRLASKGSAYLNMFEHISLMTLDSLQKCVFSFDSNCQEKPSEYITAILELSTLVARRHQRLLLHVDLFYYLTHDGMRFRKACRLVHDFTDAVIRERRRTLLDQGGVDVLKAKAKAKTLDFIDVLLLSKDEHGKALSDEDIRAEADTFMFGGHDTTASGLSWILYNLARHPEYQERCRQEVRELLRDREPEEIEWDDLAQLPFLTMCIKESLRLHPPVTAISRCCTQDIVLPDGRVIPKGVISRISIFGTHHNPAVWPDPEVYDPFRFDADNVKGRSPLAFIPFSAGPRNCIGQTFAMSEMKVALALTLLRFRVLPDDKEPRRKPELILRAEGGLWLKVEPLSAGAQ.

Residues 19-39 (WLLLLLAGASCLLAYILTPIY) traverse the membrane as a helical segment. Cys-468 is a heme binding site.

This sequence belongs to the cytochrome P450 family. The cofactor is heme. Highest level in polymorphonuclear leukocytes and dendritic cells. Detectable in lymph nodes, spleen, bone marrow and peripheral blood. Highly expressed in ovary. Very low level in liver, kidney, and smooth muscle. Expressed in neutrophils (at protein level).

It is found in the endoplasmic reticulum membrane. Its subcellular location is the microsome membrane. It carries out the reaction leukotriene B4 + reduced [NADPH--hemoprotein reductase] + O2 = 18-hydroxy-leukotriene B4 + oxidized [NADPH--hemoprotein reductase] + H2O + H(+). It catalyses the reaction leukotriene B4 + reduced [NADPH--hemoprotein reductase] + O2 = 19-hydroxy-leukotriene B4 + oxidized [NADPH--hemoprotein reductase] + H2O + H(+). It functions in the pathway lipid metabolism; leukotriene B4 degradation. Its function is as follows. A cytochrome P450 monooxygenase involved in the metabolism of the pro-inflammatory lipid mediator leukotriene B4 (LTB4). Hydroxylates at the omega-1 and omega-2 positions LTB4. This oxidation step leads to LTB4 inactivation, which is postulated to be a crucial part of the resolution of inflammation. Mechanistically, uses molecular oxygen inserting one oxygen atom into a substrate, and reducing the second into a water molecule, with two electrons provided by NADPH via cytochrome P450 reductase (CPR; NADPH-ferrihemoprotein reductase). The polypeptide is Cytochrome P450 4F3 (Mus musculus (Mouse)).